The following is a 392-amino-acid chain: Formate-dependent phosphoribosylglycinamide formyltransferase (392 aa).

N(1)-(5-phospho-beta-D-ribosyl)glycinamide is bound by residues 20-21 (EL) and E80. Residues R112, K153, 158-163 (SSGKGQ), 193-196 (EGFV), and E201 contribute to the ATP site. Positions 117 to 306 (RLAAEELGLP…EFALHVRAIL (190 aa)) constitute an ATP-grasp domain. Mg(2+) contacts are provided by E265 and E277. Residues D284, K355, and 362-363 (RR) each bind N(1)-(5-phospho-beta-D-ribosyl)glycinamide.

This sequence belongs to the PurK/PurT family. Homodimer.

The catalysed reaction is N(1)-(5-phospho-beta-D-ribosyl)glycinamide + formate + ATP = N(2)-formyl-N(1)-(5-phospho-beta-D-ribosyl)glycinamide + ADP + phosphate + H(+). The protein operates within purine metabolism; IMP biosynthesis via de novo pathway; N(2)-formyl-N(1)-(5-phospho-D-ribosyl)glycinamide from N(1)-(5-phospho-D-ribosyl)glycinamide (formate route): step 1/1. Functionally, involved in the de novo purine biosynthesis. Catalyzes the transfer of formate to 5-phospho-ribosyl-glycinamide (GAR), producing 5-phospho-ribosyl-N-formylglycinamide (FGAR). Formate is provided by PurU via hydrolysis of 10-formyl-tetrahydrofolate. In Aeromonas salmonicida (strain A449), this protein is Formate-dependent phosphoribosylglycinamide formyltransferase.